The sequence spans 247 residues: Probable transcriptional regulatory protein lpl1249 (247 aa).

Belongs to the TACO1 family.

It localises to the cytoplasm. The sequence is that of Probable transcriptional regulatory protein lpl1249 from Legionella pneumophila (strain Lens).